The chain runs to 706 residues: Probable N(6)-adenosine-methyltransferase MT-A70-like (706 aa).

Disordered stretches follow at residues 64-114 (RPFV…VAAA) and 223-261 (TLPLLQPPPAPQMPPSETDAGSAMIPRTPQQQQPQPDMW). The segment covering 103–114 (SPGSSPASVAAA) has biased composition (low complexity). Residues 227 to 236 (LQPPPAPQMP) are compositionally biased toward pro residues. S-adenosyl-L-methionine is bound by residues 479 to 480 (DI) and D497. The positively charged region required for RNA-binding stretch occupies residues 567 to 580 (RIIRTGRTGHWLNH). S-adenosyl-L-methionine-binding positions include K614, 637 to 640 (RMHN), and 650 to 651 (NQ). The disordered stretch occupies residues 669–706 (AYPDSEVQPPSPPRASAPIDGDQGTSQKPTVSDGERPA).

Belongs to the MT-A70-like family.

The protein resides in the nucleus. It catalyses the reaction an adenosine in mRNA + S-adenosyl-L-methionine = an N(6)-methyladenosine in mRNA + S-adenosyl-L-homocysteine + H(+). In terms of biological role, probable N6-methyltransferase that methylates adenosine residues of some mRNAs. N6-methyladenosine (m6A), which is present at internal sites of some mRNAs, may play a role in the efficiency of mRNA splicing, transport or translation. This is Probable N(6)-adenosine-methyltransferase MT-A70-like from Oryza sativa subsp. japonica (Rice).